Consider the following 302-residue polypeptide: MGKSSNIVFDRIKEERQMLSFFKIFQRADLSSDCMRALPYSFISKVSEKDFSYKMVIRAQWGKTWDVEVSKNPTYYYIETRGWDLFVSDNALGQNEFITFTHRGNMVFHVNIYEQNGLEMRKPRKFQTMGPSSGIKKEEGENSLIDVKKEEESDESPGRAEFLVRKKKTEDSKSSKKKMTRNKVKKKSKSKSKQVLDGVPEFKITIRKSYLKFLAIPKHFVDDHIPNKSKIFTIRHPNGGSWKVLCLVREIRTIFSGGYSKLAREFPLMVGDKCTFKLIKPFEFVLLTSKKNREKMDQCMID.

Residues 21-116 (FFKIFQRADL…VFHVNIYEQN (96 aa)) constitute a DNA-binding region (TF-B3 1). The interval 123-192 (PRKFQTMGPS…KVKKKSKSKS (70 aa)) is disordered. Positions 135 to 174 (IKKEEGENSLIDVKKEEESDESPGRAEFLVRKKKTEDSKS) are enriched in basic and acidic residues. A compositionally biased stretch (basic residues) spans 175–192 (SKKKMTRNKVKKKSKSKS). The segment at residues 199–292 (VPEFKITIRK…EFVLLTSKKN (94 aa)) is a DNA-binding region (TF-B3 2).

It localises to the nucleus. In Arabidopsis thaliana (Mouse-ear cress), this protein is B3 domain-containing protein At3g17010.